We begin with the raw amino-acid sequence, 468 residues long: Tyrosine-protein phosphatase YopH (468 aa).

The disordered stretch occupies residues 127–194; the sequence is ARGHVSSHSH…TVSPYGPEAR (68 aa). Low complexity predominate over residues 130–141; sequence HVSSHSHSALHA. The Tyrosine-protein phosphatase domain occupies 152–461; that stretch reads SHLDPRTPPL…DVLIKLAEGQ (310 aa). The Phosphocysteine intermediate role is filled by Cys-403.

Belongs to the protein-tyrosine phosphatase family. Non-receptor class subfamily.

It localises to the secreted. It catalyses the reaction O-phospho-L-tyrosyl-[protein] + H2O = L-tyrosyl-[protein] + phosphate. Essential virulence determinant. This protein is a protein tyrosine phosphatase. The essential function of YopH in Yersinia pathogenesis is host-protein dephosphorylation. It contributes to the ability of the bacteria to resist phagocytosis by peritoneal macrophages. This chain is Tyrosine-protein phosphatase YopH (yopH), found in Yersinia pseudotuberculosis serotype I (strain IP32953).